The primary structure comprises 142 residues: Bacilliredoxin ABC2448 (142 aa).

Belongs to the bacilliredoxin family.

This Shouchella clausii (strain KSM-K16) (Alkalihalobacillus clausii) protein is Bacilliredoxin ABC2448.